A 41-amino-acid chain; its full sequence is Trypsin inhibitor 2c (41 aa).

Cystine bridges form between cysteine 11–cysteine 32 and cysteine 15–cysteine 28.

Its function is as follows. Inhibits bovine trypsin with a Ki of 0.174 nM and trypsin-like proteases from G.mellonella larvae. Has no activity against serine proteases chymotrypsin, subtilisin and elastase. Has no activity against cysteine proteases from beetle gut. In Fagopyrum esculentum (Common buckwheat), this protein is Trypsin inhibitor 2c.